The primary structure comprises 96 residues: UPF0235 protein NT01EI_0281 (96 aa).

The protein belongs to the UPF0235 family.

In Edwardsiella ictaluri (strain 93-146), this protein is UPF0235 protein NT01EI_0281.